The primary structure comprises 153 residues: MSNQMNTMDIKEILKYLPHRYPFLLIDRVLDFTAGESLHAIKNVTINEPFFVGHFPVAPVMPGVLILEAMAQATGLLAFKTMSSEPSPDVLYYFAGIDNARFKRVVEPGDQLHFEVKMIKERRGIGVFYGEAKVDGELVCSAEIMCARREISK.

His54 is a catalytic residue.

Belongs to the thioester dehydratase family. FabZ subfamily.

It is found in the cytoplasm. The enzyme catalyses a (3R)-hydroxyacyl-[ACP] = a (2E)-enoyl-[ACP] + H2O. Functionally, involved in unsaturated fatty acids biosynthesis. Catalyzes the dehydration of short chain beta-hydroxyacyl-ACPs and long chain saturated and unsaturated beta-hydroxyacyl-ACPs. The sequence is that of 3-hydroxyacyl-[acyl-carrier-protein] dehydratase FabZ from Shewanella amazonensis (strain ATCC BAA-1098 / SB2B).